A 315-amino-acid chain; its full sequence is Methionyl-tRNA formyltransferase (315 aa).

Ser-110–Pro-113 contacts (6S)-5,6,7,8-tetrahydrofolate.

The protein belongs to the Fmt family.

It carries out the reaction L-methionyl-tRNA(fMet) + (6R)-10-formyltetrahydrofolate = N-formyl-L-methionyl-tRNA(fMet) + (6S)-5,6,7,8-tetrahydrofolate + H(+). Its function is as follows. Attaches a formyl group to the free amino group of methionyl-tRNA(fMet). The formyl group appears to play a dual role in the initiator identity of N-formylmethionyl-tRNA by promoting its recognition by IF2 and preventing the misappropriation of this tRNA by the elongation apparatus. The polypeptide is Methionyl-tRNA formyltransferase (Lactobacillus delbrueckii subsp. bulgaricus (strain ATCC BAA-365 / Lb-18)).